The chain runs to 382 residues: Sphingoid long-chain base transporter RSB1 (382 aa).

Residues 1-34 lie on the Extracellular side of the membrane; sequence MSNATNNTLGSLLPQLEAAANSNSLYGGMVPNLR. Residues asparagine 3 and asparagine 6 are each glycosylated (N-linked (GlcNAc...) asparagine). The helical transmembrane segment at 35-55 threads the bilayer; the sequence is FNITMIVIWGILLTIHVVQLL. Residues 56 to 57 are Cytoplasmic-facing; sequence MR. Residues 58–78 traverse the membrane as a helical segment; that stretch reads QYWFSIAFICTGILEVLGYIG. Residues 79-90 are Extracellular-facing; sequence RTWSHSNVADMD. The chain crosses the membrane as a helical span at residues 91–111; that stretch reads AFLLNMICLTIAPVFTMGGIY. The Cytoplasmic portion of the chain corresponds to 112 to 135; sequence YQLAKLIEVYGHRFSLLPSPMAYS. A helical membrane pass occupies residues 136-156; that stretch reads FIFICSDIVSLVVQAVGGGLC. Residues 157 to 171 lie on the Extracellular side of the membrane; that stretch reads GVAVTDGTSTTTGNH. Residues 172–192 traverse the membrane as a helical segment; that stretch reads VFIAGLAIQVASMAIFLMLWF. The Cytoplasmic segment spans residues 193 to 241; it reads HFLFRIYISVRWEHINSRPISLSLLKISQTEVDYLYREKFHFLRLEPKR. The helical transmembrane segment at 242–262 threads the bilayer; it reads WVFHYFNLAMTVAVLTIFTRC. Over 263 to 281 the chain is Extracellular; that stretch reads CYRLAELVVGWDGYLITHE. The chain crosses the membrane as a helical span at residues 282–302; sequence WYFIILDALMMAIATVTLTIF. At 303–382 the chain is on the cytoplasmic side; that stretch reads HPGFAFKGRS…LFSSKKKAKL (80 aa).

Belongs to the lipid-translocating exporter (LTE) (TC 9.A.26.1) family.

The protein resides in the cell membrane. Catalyzes the ATP-dependent translocation of sphingoid long-chain bases (LCBs) from the cytoplasmic site toward the extracytoplasmic side of the membrane (flip-flop). Involved in the establishment of the functional lipid asymmetry of the plasma membrane. Regulates intracellular levels of LCBs, sphingolipid precursors that are growth inhibitory at increased levels. The sequence is that of Sphingoid long-chain base transporter RSB1 (RSB1) from Saccharomyces cerevisiae (strain Lalvin EC1118 / Prise de mousse) (Baker's yeast).